Consider the following 405-residue polypeptide: 4-hydroxy-3-methylbut-2-en-1-yl diphosphate synthase (flavodoxin) (405 aa).

[4Fe-4S] cluster contacts are provided by Cys-297, Cys-300, Cys-343, and Glu-350.

It belongs to the IspG family. It depends on [4Fe-4S] cluster as a cofactor.

The catalysed reaction is (2E)-4-hydroxy-3-methylbut-2-enyl diphosphate + oxidized [flavodoxin] + H2O + 2 H(+) = 2-C-methyl-D-erythritol 2,4-cyclic diphosphate + reduced [flavodoxin]. It functions in the pathway isoprenoid biosynthesis; isopentenyl diphosphate biosynthesis via DXP pathway; isopentenyl diphosphate from 1-deoxy-D-xylulose 5-phosphate: step 5/6. In terms of biological role, converts 2C-methyl-D-erythritol 2,4-cyclodiphosphate (ME-2,4cPP) into 1-hydroxy-2-methyl-2-(E)-butenyl 4-diphosphate. This is 4-hydroxy-3-methylbut-2-en-1-yl diphosphate synthase (flavodoxin) from Francisella tularensis subsp. mediasiatica (strain FSC147).